The following is a 487-amino-acid chain: Serralysin (487 aa).

Positions 1–16 (MQSTKKAIEITESSLA) are excised as a propeptide. Residue His-192 participates in Zn(2+) binding. Glu-193 is an active-site residue. Positions 196, 202, and 232 each coordinate Zn(2+). Positions 269, 271, 273, 301, 303, 304, 306, 343, 345, 350, 352, 354, 359, 361, 363, 367, 368, 369, 370, 372, 376, 377, 378, 379, 381, 385, 386, 387, 388, 390, 399, 406, and 416 each coordinate Ca(2+). 2 Hemolysin-type calcium-binding repeats span residues 348 to 365 (IGGS…NNVL) and 366 to 383 (KGGA…ADEL).

This sequence belongs to the peptidase M10B family. It depends on Ca(2+) as a cofactor. Requires Zn(2+) as cofactor.

The protein resides in the secreted. It carries out the reaction Preferential cleavage of bonds with hydrophobic residues in P1'.. Functionally, has insecticidal activity against the locust M.palpalis. When administered orally to locusts at a low dose it causes them to lie on their sides exhibiting sporadic limb movements and muscular twitching, followed by full recovery. When administered at higher doses the same symptoms are observed, followed by death. The polypeptide is Serralysin (Serratia marcescens).